The primary structure comprises 227 residues: Lipoprotein-releasing system ATP-binding protein LolD (227 aa).

One can recognise an ABC transporter domain in the interval 7 to 227 (LRLERIGRAY…TLKDGRVVDL (221 aa)). Position 43-50 (43-50 (APSGAGKS)) interacts with ATP.

Belongs to the ABC transporter superfamily. Lipoprotein translocase (TC 3.A.1.125) family. As to quaternary structure, the complex is composed of two ATP-binding proteins (LolD) and two transmembrane proteins (LolC and LolE).

The protein localises to the cell inner membrane. Functionally, part of the ABC transporter complex LolCDE involved in the translocation of mature outer membrane-directed lipoproteins, from the inner membrane to the periplasmic chaperone, LolA. Responsible for the formation of the LolA-lipoprotein complex in an ATP-dependent manner. In Brucella abortus biovar 1 (strain 9-941), this protein is Lipoprotein-releasing system ATP-binding protein LolD.